A 349-amino-acid chain; its full sequence is Twinfilin-2 (349 aa).

Ala-2 is modified (N-acetylalanine). ADF-H domains follow at residues 4–139 and 177–313; these read QTGI…KHLS and GLAF…DEVH. Lys-14 bears the N6-acetyllysine mark. Tyr-309 carries the phosphotyrosine modification. The tract at residues 322-349 is disordered; that stretch reads AFAKPKGPGGKRGHKRLIRGPGENGDDS. Residues 330–339 show a composition bias toward basic residues; that stretch reads GGKRGHKRLI. Ser-349 carries the phosphoserine modification.

The protein belongs to the actin-binding proteins ADF family. Twinfilin subfamily. Interacts with G-actin; ADP-actin form and capping protein (CP). May also be able to interact with TWF1 and phosphoinositides, PI(4,5)P2. When bound to PI(4,5)P2, it is down-regulated. Interacts with MYO7A. In terms of processing, in vitro, phosphorylated by PRKCZ, CK2 and SRC. In terms of tissue distribution, ubiquitously expressed (at protein level).

It is found in the cytoplasm. The protein localises to the cytoskeleton. It localises to the perinuclear region. Its subcellular location is the cell projection. The protein resides in the stereocilium. Its function is as follows. Actin-binding protein involved in motile and morphological processes. Inhibits actin polymerization, likely by sequestering G-actin. By capping the barbed ends of filaments, it also regulates motility. Seems to play an important role in clathrin-mediated endocytosis and distribution of endocytic organelles. May play a role in regulating the mature length of the middle and short rows of stereocilia. The chain is Twinfilin-2 (TWF2) from Homo sapiens (Human).